The chain runs to 730 residues: Dual function macrocyclase-peptidase POPB (730 aa).

Residues Met1–Pro34 are disordered. Catalysis depends on charge relay system residues Ser577, Asp661, and His698.

The protein belongs to the peptidase S9A family. In terms of assembly, monomer.

It carries out the reaction Hydrolysis of Pro-|-Xaa &gt;&gt; Ala-|-Xaa in oligopeptides.. Dual function macrocyclase-peptidase involved in the biosynthesis of the highly toxic amanitin toxin family of macrocycles. Cleaves peptide bonds on the C-terminal side of prolyl residues. The enzyme first removes 10 residues from the N-terminus of a 35-residue substrate. Conformational trapping of the 25 amino-acid peptide forces the enzyme to release this intermediate rather than proceed to macrocyclization. The enzyme rebinds the 25 amino-acid peptide in a different conformation and catalyzes macrocyclization of the N-terminal eight residues. The polypeptide is Dual function macrocyclase-peptidase POPB (Galerina marginata (strain CBS 339.88)).